Reading from the N-terminus, the 265-residue chain is Glutamate racemase (265 aa).

Substrate contacts are provided by residues aspartate 12–serine 13 and tyrosine 44–glycine 45. Cysteine 75 (proton donor/acceptor) is an active-site residue. Asparagine 76–threonine 77 is a binding site for substrate. Cysteine 186 serves as the catalytic Proton donor/acceptor. Residue threonine 187–histidine 188 coordinates substrate.

Belongs to the aspartate/glutamate racemases family.

It catalyses the reaction L-glutamate = D-glutamate. It participates in cell wall biogenesis; peptidoglycan biosynthesis. Provides the (R)-glutamate required for cell wall biosynthesis. This chain is Glutamate racemase, found in Pseudomonas putida (strain GB-1).